The following is a 257-amino-acid chain: MGRKFFVGGNWKCNGTQESVSKIVDTLNEPTIAANDVVTVVVSPPYVFLPDENAELKHEIQVAAQNCWVKKGGAFTGEVSAQMLANLGITWVILGHSERRTLLGESNEFVGKKAAYAQSEGLGVIACIGELLEEREAGKTFDVCFKQLKSFARFPAKPWDNVVVAYEPVWAIGTGKVASPEQAQEVHVAVRDWLKTNVSEEVASKTRIIYGGSVNGGNSLALAAQEDVDGFLVGGASLKGPEFATIINSVTAKKVAA.

Substrate contacts are provided by Asn-10 and Lys-12. Catalysis depends on His-96, which acts as the Electrophile. Catalysis depends on Glu-167, which acts as the Proton acceptor.

Belongs to the triosephosphate isomerase family. As to quaternary structure, homodimer. Higher levels found in leaves than in roots.

The protein resides in the cytoplasm. The catalysed reaction is D-glyceraldehyde 3-phosphate = dihydroxyacetone phosphate. The protein operates within carbohydrate biosynthesis; gluconeogenesis. It functions in the pathway carbohydrate degradation; glycolysis; D-glyceraldehyde 3-phosphate from glycerone phosphate: step 1/1. This is Triosephosphate isomerase, cytosolic (TPI) from Stellaria longipes (Longstalk starwort).